A 503-amino-acid polypeptide reads, in one-letter code: Aspartyl/glutamyl-tRNA(Asn/Gln) amidotransferase subunit B (503 aa).

This sequence belongs to the GatB/GatE family. GatB subfamily. Heterotrimer of A, B and C subunits.

It catalyses the reaction L-glutamyl-tRNA(Gln) + L-glutamine + ATP + H2O = L-glutaminyl-tRNA(Gln) + L-glutamate + ADP + phosphate + H(+). It carries out the reaction L-aspartyl-tRNA(Asn) + L-glutamine + ATP + H2O = L-asparaginyl-tRNA(Asn) + L-glutamate + ADP + phosphate + 2 H(+). Allows the formation of correctly charged Asn-tRNA(Asn) or Gln-tRNA(Gln) through the transamidation of misacylated Asp-tRNA(Asn) or Glu-tRNA(Gln) in organisms which lack either or both of asparaginyl-tRNA or glutaminyl-tRNA synthetases. The reaction takes place in the presence of glutamine and ATP through an activated phospho-Asp-tRNA(Asn) or phospho-Glu-tRNA(Gln). The sequence is that of Aspartyl/glutamyl-tRNA(Asn/Gln) amidotransferase subunit B from Roseobacter denitrificans (strain ATCC 33942 / OCh 114) (Erythrobacter sp. (strain OCh 114)).